Consider the following 95-residue polypeptide: MAIDADEVQQIAHLARIRIDEEAVSGYARDLTGILAFVEQMGNVDTDGVEPMAHPWDATQRLRPDEVTEPNLREHYQSGAPAVEAGLYLVPRVVE.

This sequence belongs to the GatC family. As to quaternary structure, heterotrimer of A, B and C subunits.

It catalyses the reaction L-glutamyl-tRNA(Gln) + L-glutamine + ATP + H2O = L-glutaminyl-tRNA(Gln) + L-glutamate + ADP + phosphate + H(+). The catalysed reaction is L-aspartyl-tRNA(Asn) + L-glutamine + ATP + H2O = L-asparaginyl-tRNA(Asn) + L-glutamate + ADP + phosphate + 2 H(+). Functionally, allows the formation of correctly charged Asn-tRNA(Asn) or Gln-tRNA(Gln) through the transamidation of misacylated Asp-tRNA(Asn) or Glu-tRNA(Gln) in organisms which lack either or both of asparaginyl-tRNA or glutaminyl-tRNA synthetases. The reaction takes place in the presence of glutamine and ATP through an activated phospho-Asp-tRNA(Asn) or phospho-Glu-tRNA(Gln). This chain is Aspartyl/glutamyl-tRNA(Asn/Gln) amidotransferase subunit C, found in Halorhodospira halophila (strain DSM 244 / SL1) (Ectothiorhodospira halophila (strain DSM 244 / SL1)).